Consider the following 239-residue polypeptide: Carboxy-S-adenosyl-L-methionine synthase (239 aa).

S-adenosyl-L-methionine-binding positions include Tyr-36, 61–63 (GCS), 111–112 (DI), Asn-126, and Arg-193.

The protein belongs to the class I-like SAM-binding methyltransferase superfamily. Cx-SAM synthase family. As to quaternary structure, homodimer.

The enzyme catalyses prephenate + S-adenosyl-L-methionine = carboxy-S-adenosyl-L-methionine + 3-phenylpyruvate + H2O. In terms of biological role, catalyzes the conversion of S-adenosyl-L-methionine (SAM) to carboxy-S-adenosyl-L-methionine (Cx-SAM). This chain is Carboxy-S-adenosyl-L-methionine synthase, found in Nitratiruptor sp. (strain SB155-2).